Reading from the N-terminus, the 1203-residue chain is Partitioning defective 3 homolog B (1203 aa).

Disordered regions lie at residues 79-104 (FDEQ…PDAF) and 138-162 (RRSS…SGQS). A Phosphoserine modification is found at Ser100. The segment covering 152-162 (QPSTASLSGQS) has biased composition (polar residues). One can recognise a PDZ 1 domain in the interval 201 to 289 (TRAVEISGEG…SPSVILHVLL (89 aa)). Residues 334 to 374 (TRASSPEGEEPASPQQSKSPRVPRLGRKPSSPSLSPLMGFG) form a disordered region. A phosphoserine mark is found at Ser346, Ser352, and Ser368. 2 consecutive PDZ domains span residues 383 to 468 (KIDL…VIAR) and 496 to 585 (TLEI…GMIQ). Ser635, Ser710, Ser728, Ser730, Ser746, Ser749, and Ser801 each carry phosphoserine. Residues 718–732 (GKVQSLADRRSDSPG) show a composition bias toward basic and acidic residues. Residues 718-743 (GKVQSLADRRSDSPGKDFGPTLGLKK) form a disordered region. Disordered regions lie at residues 787–927 (KSYD…EKQA), 968–994 (VFRS…PDHL), and 1050–1203 (RPSD…TAAV). Thr810 is modified (phosphothreonine). Residues 827–842 (VENKAKNIKKTKEKEK) show a composition bias toward basic and acidic residues. Residues 843–854 (KKGKGKLKVKEK) are compositionally biased toward basic residues. Composition is skewed to basic and acidic residues over residues 855 to 865 (KLKEEHEDAER), 881 to 893 (KKDD…EQKG), 906 to 927 (ERMK…EKQA), and 984 to 994 (RDGRPLSPDHL). Ser1088 and Ser1182 each carry phosphoserine.

The protein belongs to the PAR3 family. Interacts with PARD6B. Interacts with INSC/inscuteable.

The protein resides in the endomembrane system. It is found in the cell junction. Its subcellular location is the tight junction. Putative adapter protein involved in asymmetrical cell division and cell polarization processes. May play a role in the formation of epithelial tight junctions. The sequence is that of Partitioning defective 3 homolog B (Pard3b) from Mus musculus (Mouse).